Consider the following 380-residue polypeptide: Crotonobetainyl-CoA reductase (380 aa).

The protein belongs to the acyl-CoA dehydrogenase family. As to quaternary structure, homotetramer. FAD is required as a cofactor.

It is found in the cytoplasm. The enzyme catalyses 4-(trimethylamino)butanoyl-CoA + oxidized [electron-transfer flavoprotein] + H(+) = crotonobetainyl-CoA + reduced [electron-transfer flavoprotein]. It functions in the pathway amine and polyamine metabolism; carnitine metabolism. Functionally, catalyzes the reduction of crotonobetainyl-CoA to gamma-butyrobetainyl-CoA. The chain is Crotonobetainyl-CoA reductase from Salmonella agona (strain SL483).